The primary structure comprises 349 residues: Core protein VP7 (349 aa).

An N-linked (GlcNAc...) asparagine; by host glycan is attached at N45.

Belongs to the orbivirus VP7 family. Homotrimer.

The protein resides in the virion. Its function is as follows. Major structural core protein; binds to structural protein VP3. Constitutes the surface of the AHSV core. In Camelus dromedarius (Dromedary), this protein is Core protein VP7 (Segment-7).